The following is a 21-amino-acid chain: Phospholipase A2 crotoxin basic chain (21 aa).

This sequence belongs to the phospholipase A2 family. Group II subfamily. Ca(2+) serves as cofactor. Expressed by the venom gland.

It localises to the secreted. It catalyses the reaction a 1,2-diacyl-sn-glycero-3-phosphocholine + H2O = a 1-acyl-sn-glycero-3-phosphocholine + a fatty acid + H(+). Snake venom phospholipase A2 (PLA2) that induces a conspicuous local myotoxic effect and moderate footpad edema. In vitro, it shows anticoagulant effects and is not cytotoxic on myoblast but is able to lyse myotubes. PLA2 catalyzes the calcium-dependent hydrolysis of the 2-acyl groups in 3-sn-phosphoglycerides. The protein is Phospholipase A2 crotoxin basic chain of Crotalus durissus cumanensis (South American rattlesnake).